We begin with the raw amino-acid sequence, 162 residues long: Cyclic pyranopterin monophosphate synthase (162 aa).

Substrate is bound by residues 75–77 and 115–116; these read MCH and ME. Aspartate 130 is a catalytic residue.

Belongs to the MoaC family. In terms of assembly, homohexamer; trimer of dimers.

The enzyme catalyses (8S)-3',8-cyclo-7,8-dihydroguanosine 5'-triphosphate = cyclic pyranopterin phosphate + diphosphate. It participates in cofactor biosynthesis; molybdopterin biosynthesis. Its function is as follows. Catalyzes the conversion of (8S)-3',8-cyclo-7,8-dihydroguanosine 5'-triphosphate to cyclic pyranopterin monophosphate (cPMP). This chain is Cyclic pyranopterin monophosphate synthase, found in Geobacillus kaustophilus (strain HTA426).